The following is a 185-amino-acid chain: MINEIKNDAKDRMAKSVESLKTQMSKIRTGRAHPSLLDGIQVEYYGAATPLKQLANVVAEDARTLSISIFDRSMIQAVEKAILTSDLGLNPSSNGQTLRVPLPPLTEERRRDLTKIVRAEAEGARVAVRNIRRDANADLKALLKDKEISEDDDRRAQEEIQKLTDSFIKLVDEALALKEKELMEI.

Belongs to the RRF family.

It is found in the cytoplasm. In terms of biological role, responsible for the release of ribosomes from messenger RNA at the termination of protein biosynthesis. May increase the efficiency of translation by recycling ribosomes from one round of translation to another. The chain is Ribosome-recycling factor from Aeromonas hydrophila subsp. hydrophila (strain ATCC 7966 / DSM 30187 / BCRC 13018 / CCUG 14551 / JCM 1027 / KCTC 2358 / NCIMB 9240 / NCTC 8049).